Here is a 756-residue protein sequence, read N- to C-terminus: Photosystem I P700 chlorophyll a apoprotein A1 (756 aa).

8 helical membrane passes run 73–96 (IFSAHFGHLAVIFVWLSGMYFHGA), 159–182 (LYVTAIGGLVMAGLMLFAGWFHYH), 198–222 (MNHHLAGLLGLGSLGWAGHQIHVSL), 298–316 (TAHHHLAIAVLFIIAGHMY), 353–376 (WHAQLAINLAMMGSLSIIVAHHMY), 392–418 (LSLFTHHMWIGGFLIVGGAAHGAIYMV), 440–462 (AIISHLNWVCIFLGFHSFGLYIH), and 537–555 (FLVHHIHAFTIHVTVLILL). [4Fe-4S] cluster is bound by residues Cys579 and Cys588. 2 consecutive transmembrane segments (helical) span residues 595-616 (HVFLGLFWMYNSLSIVIFHFSW) and 670-692 (LSAYGLLFLGAHFVWAFSLMFLF). His681 lines the chlorophyll a' pocket. 2 residues coordinate chlorophyll a: Met689 and Tyr697. Trp698 serves as a coordination point for phylloquinone. Residues 730–750 (AVGVAHYLLGGIATTWAFFLA) traverse the membrane as a helical segment.

The protein belongs to the PsaA/PsaB family. The PsaA/B heterodimer binds the P700 chlorophyll special pair and subsequent electron acceptors. PSI consists of a core antenna complex that captures photons, and an electron transfer chain that converts photonic excitation into a charge separation. The cyanobacterial PSI reaction center is composed of one copy each of PsaA,B,C,D,E,F,I,J,K,L,M and X, and forms trimeric complexes. Requires PSI electron transfer chain: 5 chlorophyll a, 1 chlorophyll a', 2 phylloquinones and 3 4Fe-4S clusters. PSI core antenna: 90 chlorophyll a, 22 carotenoids, 3 phospholipids and 1 galactolipid. P700 is a chlorophyll a/chlorophyll a' dimer, A0 is one or more chlorophyll a, A1 is one or both phylloquinones and FX is a shared 4Fe-4S iron-sulfur center. as cofactor.

It localises to the cellular thylakoid membrane. It catalyses the reaction reduced [plastocyanin] + hnu + oxidized [2Fe-2S]-[ferredoxin] = oxidized [plastocyanin] + reduced [2Fe-2S]-[ferredoxin]. In terms of biological role, psaA and PsaB bind P700, the primary electron donor of photosystem I (PSI), as well as the electron acceptors A0, A1 and FX. PSI is a plastocyanin/cytochrome c6-ferredoxin oxidoreductase, converting photonic excitation into a charge separation, which transfers an electron from the donor P700 chlorophyll pair to the spectroscopically characterized acceptors A0, A1, FX, FA and FB in turn. Oxidized P700 is reduced on the lumenal side of the thylakoid membrane by plastocyanin or cytochrome c6. This Cyanothece sp. (strain PCC 7425 / ATCC 29141) protein is Photosystem I P700 chlorophyll a apoprotein A1.